We begin with the raw amino-acid sequence, 292 residues long: 4-hydroxy-tetrahydrodipicolinate synthase (292 aa).

Threonine 45 contributes to the pyruvate binding site. Tyrosine 133 acts as the Proton donor/acceptor in catalysis. Lysine 161 functions as the Schiff-base intermediate with substrate in the catalytic mechanism. Pyruvate is bound at residue isoleucine 203.

It belongs to the DapA family. As to quaternary structure, homotetramer; dimer of dimers.

It is found in the cytoplasm. The enzyme catalyses L-aspartate 4-semialdehyde + pyruvate = (2S,4S)-4-hydroxy-2,3,4,5-tetrahydrodipicolinate + H2O + H(+). It functions in the pathway amino-acid biosynthesis; L-lysine biosynthesis via DAP pathway; (S)-tetrahydrodipicolinate from L-aspartate: step 3/4. Functionally, catalyzes the condensation of (S)-aspartate-beta-semialdehyde [(S)-ASA] and pyruvate to 4-hydroxy-tetrahydrodipicolinate (HTPA). This Aromatoleum aromaticum (strain DSM 19018 / LMG 30748 / EbN1) (Azoarcus sp. (strain EbN1)) protein is 4-hydroxy-tetrahydrodipicolinate synthase.